A 356-amino-acid chain; its full sequence is DNA polymerase IV (356 aa).

The UmuC domain maps to 7–188; it reads IIHIDMDCFY…LPLKKIPGVG (182 aa). Mg(2+)-binding residues include D11 and D106. Residue E107 is part of the active site.

The protein belongs to the DNA polymerase type-Y family. Monomer. Requires Mg(2+) as cofactor.

The protein localises to the cytoplasm. The catalysed reaction is DNA(n) + a 2'-deoxyribonucleoside 5'-triphosphate = DNA(n+1) + diphosphate. Its function is as follows. Poorly processive, error-prone DNA polymerase involved in untargeted mutagenesis. Copies undamaged DNA at stalled replication forks, which arise in vivo from mismatched or misaligned primer ends. These misaligned primers can be extended by PolIV. Exhibits no 3'-5' exonuclease (proofreading) activity. May be involved in translesional synthesis, in conjunction with the beta clamp from PolIII. This Actinobacillus pleuropneumoniae serotype 3 (strain JL03) protein is DNA polymerase IV.